A 42-amino-acid polypeptide reads, in one-letter code: MNEFKRCMRVFSHSPFKVRLMLLSMLCDMVNNKPQQDKPSDK.

Its subcellular location is the cytoplasm. Its function is as follows. Required for repression of mntH by MntR. May function as a chaperone that makes manganese more available by delivering it to the necessary cellular locations when manganese is limiting. In Escherichia coli (strain K12), this protein is Small protein MntS (mntS).